A 181-amino-acid chain; its full sequence is Adenylyl-sulfate kinase (181 aa).

20 to 27 (GLSGAGKS) serves as a coordination point for ATP. Residue serine 94 is the Phosphoserine intermediate of the active site.

Belongs to the APS kinase family.

The enzyme catalyses adenosine 5'-phosphosulfate + ATP = 3'-phosphoadenylyl sulfate + ADP + H(+). The protein operates within sulfur metabolism; hydrogen sulfide biosynthesis; sulfite from sulfate: step 2/3. In terms of biological role, catalyzes the synthesis of activated sulfate. In Deinococcus geothermalis (strain DSM 11300 / CIP 105573 / AG-3a), this protein is Adenylyl-sulfate kinase.